The primary structure comprises 408 residues: Gustatory receptor 10a (408 aa).

Residues 1–20 (MTSPDERKSFWERHEFKFYR) lie on the Cytoplasmic side of the membrane. Residues 21–38 (YGHVYALIYGQVVIDYVP) form a helical membrane-spanning segment. The Extracellular portion of the chain corresponds to 39 to 48 (QRALKRGVKV). The helical transmembrane segment at 49–69 (LLIAYGHLFSMLLIVVLPGYF) threads the bilayer. Topologically, residues 70–86 (CYHFRTLTDTLDRRLQL) are cytoplasmic. Residues 87–107 (LFYVSFTNTAIKYATVIVTYV) form a helical membrane-spanning segment. Residues 108–144 (ANTVHFEAINQRCTMQRTHLEFEFKNAPQEPKRPFEF) are Extracellular-facing. The chain crosses the membrane as a helical span at residues 145 to 165 (FMYFKFCLINLMMMIQVCGIF). Residues 166–270 (AQYGEVGKGS…RESFRMHQFQ (105 aa)) lie on the Cytoplasmic side of the membrane. Residues 271–291 (LIGLMLSTLINNLTNFYTLFH) traverse the membrane as a helical segment. Topologically, residues 292–304 (MLAKQSLEEVSYP) are extracellular. The helical transmembrane segment at 305–325 (VVVGSVYATGFYIDTYIVALI) threads the bilayer. The Cytoplasmic portion of the chain corresponds to 326–381 (NEHIKLELEAVALTMRRFAEPREMDERLTREIEHLSLELLNYQPPMLCGLLHLDRR). Residues 382-402 (LVYLIAVTAFSYFITLVQFDL) traverse the membrane as a helical segment. The Extracellular portion of the chain corresponds to 403–408 (YLRKKS).

It belongs to the insect chemoreceptor superfamily. Gustatory receptor (GR) family. Gr10a subfamily. In terms of tissue distribution, expressed in the medial aspect of the third antennal segment, and in neurons of the terminal external chemosensory organ of larvae.

It is found in the cell membrane. In terms of biological role, probable gustatory receptor which mediates acceptance or avoidance behavior, depending on its substrates. This Drosophila melanogaster (Fruit fly) protein is Gustatory receptor 10a (Gr10a).